A 308-amino-acid chain; its full sequence is Aspartate carbamoyltransferase catalytic subunit (308 aa).

Residues R55 and T56 each coordinate carbamoyl phosphate. K83 contacts L-aspartate. Carbamoyl phosphate is bound by residues R105, H133, and Q136. Residues R166 and R220 each coordinate L-aspartate. Positions 261 and 262 each coordinate carbamoyl phosphate.

It belongs to the aspartate/ornithine carbamoyltransferase superfamily. ATCase family. In terms of assembly, heterododecamer (2C3:3R2) of six catalytic PyrB chains organized as two trimers (C3), and six regulatory PyrI chains organized as three dimers (R2).

The enzyme catalyses carbamoyl phosphate + L-aspartate = N-carbamoyl-L-aspartate + phosphate + H(+). It functions in the pathway pyrimidine metabolism; UMP biosynthesis via de novo pathway; (S)-dihydroorotate from bicarbonate: step 2/3. Catalyzes the condensation of carbamoyl phosphate and aspartate to form carbamoyl aspartate and inorganic phosphate, the committed step in the de novo pyrimidine nucleotide biosynthesis pathway. The polypeptide is Aspartate carbamoyltransferase catalytic subunit (Chlorobium limicola (strain DSM 245 / NBRC 103803 / 6330)).